Here is a 120-residue protein sequence, read N- to C-terminus: NAD(P)H-quinone oxidoreductase subunit 3, chloroplastic (120 aa).

A run of 3 helical transmembrane segments spans residues 9-29 (IFWA…LISG), 64-84 (MFAL…PWAM), and 88-108 (VLGV…IVGS).

The protein belongs to the complex I subunit 3 family. As to quaternary structure, NDH is composed of at least 16 different subunits, 5 of which are encoded in the nucleus.

It localises to the plastid. Its subcellular location is the chloroplast thylakoid membrane. The enzyme catalyses a plastoquinone + NADH + (n+1) H(+)(in) = a plastoquinol + NAD(+) + n H(+)(out). The catalysed reaction is a plastoquinone + NADPH + (n+1) H(+)(in) = a plastoquinol + NADP(+) + n H(+)(out). In terms of biological role, NDH shuttles electrons from NAD(P)H:plastoquinone, via FMN and iron-sulfur (Fe-S) centers, to quinones in the photosynthetic chain and possibly in a chloroplast respiratory chain. The immediate electron acceptor for the enzyme in this species is believed to be plastoquinone. Couples the redox reaction to proton translocation, and thus conserves the redox energy in a proton gradient. This Gossypium barbadense (Sea Island cotton) protein is NAD(P)H-quinone oxidoreductase subunit 3, chloroplastic.